Consider the following 774-residue polypeptide: MTTESKTKTVTHILGYPRVGAQRELKFAQEKYWRGEIEQKELLAVGSELRQRHWKDQSASGLDFVTAGDFAWYDHVLTTSLLLGHVPARHNNGFPDLDTLFKVGRGQSQNSCGCGEAASDMTKWFNTNYHYIVPEFSKNDKFNVSWSQLFDEIAEAQKQGHNVKPVLLGPLSYLWLGKEVNDEEVEQGFDRLSLLPRLLTAYQAIFSKLSALGVEWVQIDEPILALELPKAWADSFKLAYQVIQSDVKLLLTTYFDGVEHHLDKITKLAVNGLHIDVSAAPDQLDAIVSALPKEWVLSVGAVNGRNVWRADLERLHERLQPVKEALGDKLWIASSCSLLHSPVDLDQETELSKETLQWFAFAKQKLREVTLLADALDGNQNAILACHQYSQPLRERESAEHINKPAVQQRLAAITPALAERAEAYSVRAQHQAEKLGLPLLPTTTIGSFPQTSDIRQQRSAYRTGKLNEQDYVTAMKGHIADAVERQERLDLDVLVHGEAERNDMVEYFAENLNGFQATRFGWVQSYGSRCVKPAIVVADIEREAPITVSWTQYAQSLTTKQMKGMLTGPVTILGWTFPREDITRKEIAQQLALVLRDEVSDLQQAGINIIQIDEPAIREGLPIKKSDQKAYLDWAVEAFKISAASAKSETQIHTHMCYSEFNEIIESVAALDADVITIETSRSNMELLKAFEDFNYPNEIGPGVYDIHSPNIPSQEWIVDLIETAAARVPVERLWVNPDCGLKTRNWKETEAALENMVKAAKALRKKWQSNAA.

Residues 23–26 (RELK) and Lys123 contribute to the 5-methyltetrahydropteroyltri-L-glutamate site. L-homocysteine-binding positions include 446-448 (IGS) and Glu499. L-methionine is bound by residues 446 to 448 (IGS) and Glu499. Residues 530–531 (RC) and Trp576 each bind 5-methyltetrahydropteroyltri-L-glutamate. L-homocysteine is bound at residue Asp614. Residue Asp614 participates in L-methionine binding. Glu620 is a binding site for 5-methyltetrahydropteroyltri-L-glutamate. 3 residues coordinate Zn(2+): His656, Cys658, and Glu680. His709 (proton donor) is an active-site residue. Residue Cys741 coordinates Zn(2+).

This sequence belongs to the vitamin-B12 independent methionine synthase family. Zn(2+) serves as cofactor.

The enzyme catalyses 5-methyltetrahydropteroyltri-L-glutamate + L-homocysteine = tetrahydropteroyltri-L-glutamate + L-methionine. The protein operates within amino-acid biosynthesis; L-methionine biosynthesis via de novo pathway; L-methionine from L-homocysteine (MetE route): step 1/1. Catalyzes the transfer of a methyl group from 5-methyltetrahydrofolate to homocysteine resulting in methionine formation. The sequence is that of 5-methyltetrahydropteroyltriglutamate--homocysteine methyltransferase from Aliivibrio fischeri (strain ATCC 700601 / ES114) (Vibrio fischeri).